The chain runs to 145 residues: Ribonuclease H (145 aa).

The RNase H type-1 domain maps to 1 to 141; the sequence is MQEVIIYSDG…ADALANRGVA (141 aa). 4 residues coordinate Mg(2+): Asp9, Glu47, Asp69, and Asp133.

It belongs to the RNase H family. As to quaternary structure, monomer. It depends on Mg(2+) as a cofactor.

It localises to the cytoplasm. The catalysed reaction is Endonucleolytic cleavage to 5'-phosphomonoester.. In terms of biological role, endonuclease that specifically degrades the RNA of RNA-DNA hybrids. This chain is Ribonuclease H, found in Cupriavidus pinatubonensis (strain JMP 134 / LMG 1197) (Cupriavidus necator (strain JMP 134)).